Consider the following 916-residue polypeptide: Protein translocase subunit SecA (916 aa).

Residues Gln-86, 104-108 (GEGKT), and Asp-494 contribute to the ATP site. A disordered region spans residues 859 to 916 (LEAPEKPAQLQYTAPSEGGGTQTRVETRSTGRSGNPAKAAEQDAAKDAAKRPAKKKRR). Residues 880 to 891 (QTRVETRSTGRS) are compositionally biased toward polar residues. Residues 898–908 (AEQDAAKDAAK) are compositionally biased toward basic and acidic residues.

Belongs to the SecA family. In terms of assembly, monomer and homodimer. Part of the essential Sec protein translocation apparatus which comprises SecA, SecYEG and auxiliary proteins SecDF. Other proteins may also be involved.

Its subcellular location is the cell membrane. The protein resides in the cytoplasm. It carries out the reaction ATP + H2O + cellular proteinSide 1 = ADP + phosphate + cellular proteinSide 2.. In terms of biological role, part of the Sec protein translocase complex. Interacts with the SecYEG preprotein conducting channel. Has a central role in coupling the hydrolysis of ATP to the transfer of proteins into and across the cell membrane, serving as an ATP-driven molecular motor driving the stepwise translocation of polypeptide chains across the membrane. The polypeptide is Protein translocase subunit SecA (Pseudarthrobacter chlorophenolicus (strain ATCC 700700 / DSM 12829 / CIP 107037 / JCM 12360 / KCTC 9906 / NCIMB 13794 / A6) (Arthrobacter chlorophenolicus)).